Consider the following 548-residue polypeptide: Chaperonin GroEL (548 aa).

ATP contacts are provided by residues 30–33 (TLGP), Lys51, 87–91 (DGTTT), Gly415, and Asp495.

This sequence belongs to the chaperonin (HSP60) family. Forms a cylinder of 14 subunits composed of two heptameric rings stacked back-to-back. Interacts with the co-chaperonin GroES.

It is found in the cytoplasm. The catalysed reaction is ATP + H2O + a folded polypeptide = ADP + phosphate + an unfolded polypeptide.. Functionally, together with its co-chaperonin GroES, plays an essential role in assisting protein folding. The GroEL-GroES system forms a nano-cage that allows encapsulation of the non-native substrate proteins and provides a physical environment optimized to promote and accelerate protein folding. The sequence is that of Chaperonin GroEL from Yersinia pseudotuberculosis serotype O:1b (strain IP 31758).